The following is a 460-amino-acid chain: Cyclic 2,3-diphosphoglycerate synthetase (460 aa).

In terms of assembly, homodimer.

It is found in the cytoplasm. It catalyses the reaction (2R)-2,3-bisphosphoglycerate + ATP + H(+) = cyclic (2R)-2,3-bisphosphoglycerate + ADP + phosphate. In terms of biological role, catalyzes the formation of cyclic 2,3-diphosphoglycerate (cDPG) by formation of an intramolecular phosphoanhydride bond at the expense of ATP. It is also able to catalyze the hydrolysis of cDPG but with significant slower rates (8-10 times). May be involved in thermoadaptation. In Methanothermus fervidus (strain ATCC 43054 / DSM 2088 / JCM 10308 / V24 S), this protein is Cyclic 2,3-diphosphoglycerate synthetase (cpgS).